We begin with the raw amino-acid sequence, 1080 residues long: Histone-lysine N-methyltransferase, H3 lysine-4 specific (1080 aa).

Disordered stretches follow at residues 1–46 (MSNY…SQYN), 54–73 (NDGT…NNAS), and 78–121 (YATN…SSGS). The tract at residues 1 to 230 (MSNYYRRAHA…THRKCRNSLI (230 aa)) is binds SWD2. A compositionally biased stretch (polar residues) spans 11–28 (SSGSYRQPQEQPQYSRSG). The segment covering 29-46 (HYQYSNGHSHQQYSSQYN) has biased composition (low complexity). Positions 54–67 (NDGTRRRYNDDRPH) are enriched in basic and acidic residues. Composition is skewed to polar residues over residues 78-87 (YATNNSQSGP) and 99-121 (RGMS…SSGS). The segment at 230-569 (ILLPRISYDR…ALDHANFPEL (340 aa)) is binds RNA. The segment at 356–569 (KKLQKLQENL…ALDHANFPEL (214 aa)) is binds SHG1. S625 carries the post-translational modification Phosphoserine. The tract at residues 646–729 (AHLLNEETDS…DQNGSSDVLD (84 aa)) is disordered. Acidic residues predominate over residues 674–692 (DEEDENMTSSSSEEEEEEA). Residues 693 to 712 (PDKKFKSESEPTTPESDHLH) show a composition bias toward basic and acidic residues. A binds SPP1 region spans residues 762-938 (MDLQNAIKDE…SLNQLNKRKK (177 aa)). The interval 762–938 (MDLQNAIKDE…SLNQLNKRKK (177 aa)) is contributes to RNA binding. The segment at 762-938 (MDLQNAIKDE…SLNQLNKRKK (177 aa)) is required for catalytic activity. At T875 the chain carries Phosphothreonine. Basic and acidic residues-rich tracts occupy residues 877 to 890 (ELCQ…KEPS) and 899 to 909 (SSRDNRASNRR). The disordered stretch occupies residues 877–909 (ELCQREESSNKEPSDSVPQEVSSSRDNRASNRR). A RxxxRR motif motif is present at residues 904–909 (RASNRR). The 118-residue stretch at 938–1055 (KPVMFARSAI…ASEELTYDYK (118 aa)) folds into the SET domain. Position 1054 (Y1054) interacts with S-adenosyl-L-methionine. The Post-SET domain occupies 1064–1080 (ERLPCLCGAPNCKGFLN).

Belongs to the class V-like SAM-binding methyltransferase superfamily. In terms of assembly, component of the Set1C/COMPASS complex which consists of SET1(2), BRE2(2), SPP1(2), SDC1(1), SHG1(1), SWD1(1), SWD2(1), and SWD3(1). Interacts with MEC3.

The protein localises to the nucleus. It is found in the chromosome. The catalysed reaction is L-lysyl(4)-[histone H3] + 3 S-adenosyl-L-methionine = N(6),N(6),N(6)-trimethyl-L-lysyl(4)-[histone H3] + 3 S-adenosyl-L-homocysteine + 3 H(+). It catalyses the reaction N(6)-methyl-L-lysyl(4)-[histone H3] + S-adenosyl-L-methionine = N(6),N(6)-dimethyl-L-lysyl(4)-[histone H3] + S-adenosyl-L-homocysteine + H(+). It carries out the reaction N(6),N(6)-dimethyl-L-lysyl(4)-[histone H3] + S-adenosyl-L-methionine = N(6),N(6),N(6)-trimethyl-L-lysyl(4)-[histone H3] + S-adenosyl-L-homocysteine + H(+). In terms of biological role, catalytic component of the COMPASS (Set1C) complex that specifically mono-, di- and trimethylates histone H3 to form H3K4me1/2/3. Binds RNAs involved in chromosome segregation, splicing and transcriptional regulation; appears to bind transcripts both co- and post-transcriptionally and binding might negatively affect its histone methyltransferase activity. COMPASS recognizes ubiquitinated H2B on one face of the nucleosome which stimulates the methylation of H3 on the opposing face. Plays a role in telomere length maintenance and transcription elongation regulation. This chain is Histone-lysine N-methyltransferase, H3 lysine-4 specific, found in Saccharomyces cerevisiae (strain ATCC 204508 / S288c) (Baker's yeast).